The following is a 429-amino-acid chain: Phosphoribosylamine--glycine ligase (429 aa).

An ATP-grasp domain is found at 109–316 (KDFLARHNIP…LVELCQAAIA (208 aa)). 135-196 (VREKGAPIVV…EEFLDGEEAS (62 aa)) provides a ligand contact to ATP. Residues Glu286 and Asn288 each contribute to the Mg(2+) site.

This sequence belongs to the GARS family. Mg(2+) is required as a cofactor. The cofactor is Mn(2+).

It catalyses the reaction 5-phospho-beta-D-ribosylamine + glycine + ATP = N(1)-(5-phospho-beta-D-ribosyl)glycinamide + ADP + phosphate + H(+). The protein operates within purine metabolism; IMP biosynthesis via de novo pathway; N(1)-(5-phospho-D-ribosyl)glycinamide from 5-phospho-alpha-D-ribose 1-diphosphate: step 2/2. The sequence is that of Phosphoribosylamine--glycine ligase from Vibrio cholerae serotype O1 (strain ATCC 39315 / El Tor Inaba N16961).